The chain runs to 382 residues: Neuropeptide Y receptor type 1 (382 aa).

Topologically, residues 1–33 are extracellular; sequence MNSTSFSQVENHSIFCNFSENSQFLAFESDDCH. 3 N-linked (GlcNAc...) asparagine glycosylation sites follow: asparagine 2, asparagine 11, and asparagine 17. The helical transmembrane segment at 34–54 threads the bilayer; that stretch reads LPLAMIFTLALAYGAVIILGV. Residues 55 to 75 lie on the Cytoplasmic side of the membrane; that stretch reads TGNLALIMIILKQKEMRNVTN. The helical transmembrane segment at 76-96 threads the bilayer; that stretch reads ILIVNLSFSDLLVAIMCLPFT. At 97 to 115 the chain is on the extracellular side; sequence FVYTLMDHWVFGEAMCKLN. The cysteines at positions 112 and 197 are disulfide-linked. A helical membrane pass occupies residues 116-136; that stretch reads PFVQCVSITVSIFSLVLIAVE. Residues 137–153 lie on the Cytoplasmic side of the membrane; that stretch reads RHQLIINPRGWRPNNRH. The helical transmembrane segment at 154–174 threads the bilayer; the sequence is AYVGIAVIWVLAVVSSLPFLI. Residues 175–210 lie on the Extracellular side of the membrane; sequence YQVLTDEPFQNVTLDAFKDKYVCFDKFPSDSHRLSY. N-linked (GlcNAc...) asparagine glycosylation occurs at asparagine 185. The chain crosses the membrane as a helical span at residues 211 to 231; that stretch reads TTLLLMLQYFGPLCFIFICYF. The Cytoplasmic portion of the chain corresponds to 232-259; the sequence is KIYIRLKRRNNMMDKMRDNKYRSSETKR. A helical membrane pass occupies residues 260–280; the sequence is INIMLLSIVVAFAVCWLPLTI. At 281-298 the chain is on the extracellular side; the sequence is FNTVFDWNHQIIATCNHN. The helical transmembrane segment at 299 to 319 threads the bilayer; it reads LLFLLCHLTAMISTCVNPIFY. The Cytoplasmic portion of the chain corresponds to 320-382; that stretch reads GFLNKNFQRD…KINNDDNEKI (63 aa). A lipid anchor (S-palmitoyl cysteine) is attached at cysteine 337. Phosphoserine is present on serine 367.

It belongs to the G-protein coupled receptor 1 family.

It localises to the cell membrane. In terms of biological role, receptor for neuropeptide Y and peptide YY. The chain is Neuropeptide Y receptor type 1 (NPY1R) from Canis lupus familiaris (Dog).